The sequence spans 931 residues: Probable zinc protease PqqL (931 aa).

His80 contacts Zn(2+). The active-site Proton acceptor is Glu83. 2 residues coordinate Zn(2+): His84 and Glu160.

Belongs to the peptidase M16 family. It depends on Zn(2+) as a cofactor.

The protein is Probable zinc protease PqqL (pqqL) of Escherichia coli (strain K12).